The primary structure comprises 330 residues: D-xylose-binding periplasmic protein (330 aa).

The N-terminal stretch at 1 to 23 is a signal peptide; sequence MKIKNILLTLCTSLLLTNVAAHA.

Belongs to the bacterial solute-binding protein 2 family.

It localises to the periplasm. Its function is as follows. Involved in the high-affinity D-xylose membrane transport system. Binds with high affinity to xylose. In Escherichia coli (strain K12), this protein is D-xylose-binding periplasmic protein (xylF).